We begin with the raw amino-acid sequence, 284 residues long: 4-hydroxybenzoate octaprenyltransferase (284 aa).

Helical transmembrane passes span 19 to 39 (IGTLLLLWPTLWSLIIAAKGM), 42 to 62 (FDVLVVFILGVVLMRSAGCVI), 93 to 113 (IVLFLVLAVVSFLLVLTMNPL), 114 to 134 (TIKLSFIGVGLAFIYPFMKRF), 136 to 156 (HLPQLFLGLAFSWAIPMAWAA), 161 to 181 (LPSIVWFIFVINALWTIAYDT), 209 to 229 (LMVGALQLVTLAMLIALGMHY), 235 to 252 (FYWALLVSGSLFVYQQHL), and 264 to 284 (AFLNNNYVGMAVTVGLFITFW).

It belongs to the UbiA prenyltransferase family. It depends on Mg(2+) as a cofactor.

The protein localises to the cell inner membrane. The enzyme catalyses all-trans-octaprenyl diphosphate + 4-hydroxybenzoate = 4-hydroxy-3-(all-trans-octaprenyl)benzoate + diphosphate. The protein operates within cofactor biosynthesis; ubiquinone biosynthesis. Functionally, catalyzes the prenylation of para-hydroxybenzoate (PHB) with an all-trans polyprenyl group. Mediates the second step in the final reaction sequence of ubiquinone-8 (UQ-8) biosynthesis, which is the condensation of the polyisoprenoid side chain with PHB, generating the first membrane-bound Q intermediate 3-octaprenyl-4-hydroxybenzoate. This Vibrio atlanticus (strain LGP32) (Vibrio splendidus (strain Mel32)) protein is 4-hydroxybenzoate octaprenyltransferase.